Reading from the N-terminus, the 416-residue chain is UDP-N-acetylglucosamine 1-carboxyvinyltransferase (416 aa).

Phosphoenolpyruvate is bound at residue 22–23 (KN). Residue R92 coordinates UDP-N-acetyl-alpha-D-glucosamine. The active-site Proton donor is the C116. C116 carries the post-translational modification 2-(S-cysteinyl)pyruvic acid O-phosphothioketal. Residues D304 and I326 each contribute to the UDP-N-acetyl-alpha-D-glucosamine site.

The protein belongs to the EPSP synthase family. MurA subfamily.

It localises to the cytoplasm. The catalysed reaction is phosphoenolpyruvate + UDP-N-acetyl-alpha-D-glucosamine = UDP-N-acetyl-3-O-(1-carboxyvinyl)-alpha-D-glucosamine + phosphate. It functions in the pathway cell wall biogenesis; peptidoglycan biosynthesis. Its function is as follows. Cell wall formation. Adds enolpyruvyl to UDP-N-acetylglucosamine. This Solidesulfovibrio magneticus (strain ATCC 700980 / DSM 13731 / RS-1) (Desulfovibrio magneticus) protein is UDP-N-acetylglucosamine 1-carboxyvinyltransferase.